An 843-amino-acid chain; its full sequence is Protein piwi (843 aa).

The Nuclear localization signal signature appears at 1–12 (MADDQGRGRRRP). The tract at residues 1 to 76 (MADDQGRGRR…TERKPWGDQY (76 aa)) is disordered. Residues 1-257 (MADDQGRGRR…ILLGTEITHK (257 aa)) are interaction with CBX5 and papi. Symmetric dimethylarginine occurs at positions 7, 9, 10, and 11. Positions 41-72 (PRADPRIEASRERRALEEAPRREGGPTERKPW) are enriched in basic and acidic residues. The 110-residue stretch at 263-372 (TIYDIMRRCS…LIPELCRVTG (110 aa)) folds into the PAZ domain. The Piwi domain maps to 538–829 (LILCLVPNDN…LATLVGTNLH (292 aa)). Mg(2+) is bound at residue Q589. Active-site residues include D614 and D685. L843 contributes to the Mg(2+) binding site.

The protein belongs to the argonaute family. Piwi subfamily. As to quaternary structure, in the ovaries, part of a complex composed of at least Panx, nxf2, piwi and Nxt1. The complex is knowns as Panx-induced co-transcriptional silencing (PICTS) complex, Panx-nxf2-dependent TAP/p15 silencing (Pandas complex), SFiNX (silencing factor interacting nuclear export variant) or piwi-Panx-nxf2-p15 (PPNP) complex. Interacts with vas; this interaction is RNA-independent. Interacts with Dcr-1 and Fmr1; these interactions occur in polar granules. Interacts (via N-terminal region) with CBX5 (via chromoshadow domain). Forms a complex with Hsp83 and Hop; probably Hop mediates the interaction between piwi and Hsp83. Forms a complex with Yb body components armi and fs(1)Yb; this interaction is required for proper piRNA loading and nuclear localization of piwi. Interaction of Piwi and fs(1)Yb is likely to occur via armi. Interacts (via the N-terminal region when unmethylated or symmetrically methylated at Arg-10) with papi (via Tudor domain). Interacts with vret. Interacts with Panx. Interacts with arx. Interacts with Tudor-SN. Interacts with Nup358 (via N-terminus). Associates with the nuclear pore complex via interaction with Elys. Interacts with thoc5; the interaction might be partly RNA-mediated. Interacts with xmas-2. Symmetrically dimethylated, most likely by csul. Methylation at Arg-10 enhances binding to papi whereas methylation at Arg-7, Arg-9 or Arg-11 reduces binding affinity to papi. Post-translationally, phosphorylated on serine and tyrosine residues in an Hsp83-dependent manner. In terms of tissue distribution, expressed in ovaries (at protein level). Expressed somatically in ovariole terminal filament cells, epithelial sheath cells, cap cells and follicle cells (at protein level). Expressed in nurse cells and oocytes in developing egg chambers (at protein level). In embryos, accumulates in pole cells (at protein level). In larval and adult testis, expressed in a germinal proliferative center at the apical tip containing somatic hub cells and mitotically dividing germ stem cells (at protein level).

The protein localises to the cytoplasm. Its subcellular location is the nucleus. The protein resides in the nucleoplasm. It localises to the chromosome. Functionally, acts via the piwi-interacting RNA (piRNA) metabolic process, which mediates the repression of transposable elements during meiosis by forming complexes composed of piRNAs and Piwi proteins and governs the methylation and subsequent repression of transposons. Directly binds piRNAs, a class of 24 to 30 nucleotide RNAs that are generated by a Dicer-independent mechanism and are primarily derived from transposons and other repeated sequence elements. In ovarian somatic cells, mediates silencing of transposable elements at the transcriptional level in a mael-dependent manner. Involved in silencing of long terminal repeat (LTR) retrotransposons in male germline. In testis, regulates spermatogenesis together with Tudor-SN. In germ cells, mediates silencing at both transcriptional and post-transcriptional levels and is involved in the maintenance of populations of primary and secondary piRNAs. Piwi-mediated transcriptional silencing is accompanied by the formation of His3 trimethylated on 'Lys-10' (H3K9me3) associated euchromatin and heterochromatin. In ovary, associates predominantly with antisense piRNAs that contain uridine at their 5' end. Association with sense piRNAs is also observed but to a lesser extent. Mediates a somatic signaling mechanism required for the maintenance of germline stem cells to produce and maintain a daughter germline stem cell. It is not essential for the further differentiation of the committed daughter cell. Acts cell autonomously to promote germline stem cell division. Its role in stem cell maintenance does not seem to require nuclear localization. Required maternally for the posterior localization of osk and vas and for pole cell formation during oogenesis and early embryogenesis. Together with Hop and Hsp83, mediates canalization, also known as developmental robustness, likely via epigenetic silencing of existing genetic variants and suppression of transposon-induced new genetic variation. Shows RNA cleavage activity, although is not required for any of its known functions. In the ovaries, forms a complex with nxf2, Panx and Nxt1 which acts as effectors of cotranscriptional transposon silencing. The protein is Protein piwi of Drosophila melanogaster (Fruit fly).